A 396-amino-acid polypeptide reads, in one-letter code: Penicillopepsin-1 (396 aa).

The signal sequence occupies residues 1 to 20 (MVVFSKVTASLACFSAVVSA). The propeptide at 21 to 72 (AAVPVKSPRQGFSVNQVQKTVTGTRTVNLPGVYANALAKYGATVPANVHAAA) is activation peptide. The Peptidase A1 domain maps to 88–393 (YLTPVKIGES…DAEGPRLGFA (306 aa)). Active-site residues include Asp104 and Asp285. Residue Asn311 is glycosylated (N-linked (GlcNAc...) asparagine). An intrachain disulfide couples Cys321 to Cys356.

Belongs to the peptidase A1 family. As to quaternary structure, monomer.

The protein resides in the secreted. The enzyme catalyses Hydrolysis of proteins with broad specificity similar to that of pepsin A, preferring hydrophobic residues at P1 and P1', but also cleaving 20-Gly-|-Glu-21 in the B chain of insulin. Clots milk, and activates trypsinogen.. In terms of biological role, secreted aspartic endopeptidase that allows assimilation of proteinaceous substrates. The scissile peptide bond is attacked by a nucleophilic water molecule activated by two aspartic residues in the active site. Shows a broad primary substrate specificity. Favors hydrophobic residues at the P1 and P1' positions, but can also activate trypsinogen and hydrolyze the B chain of insulin between positions 'Gly-20' and 'Glu-21'. In Penicillium rubens (strain ATCC 28089 / DSM 1075 / NRRL 1951 / Wisconsin 54-1255) (Penicillium chrysogenum), this protein is Penicillopepsin-1 (pepA).